The sequence spans 1007 residues: Protein vav-1 (1007 aa).

One can recognise a Calponin-homology (CH) domain in the interval 37–151 (CDLWIGCARW…TLSFLSHTKE (115 aa)). The segment at 151–239 (ESLSRGVDPF…ENDLQNTPTL (89 aa)) is AC. A disordered region spans residues 153–176 (LSRGVDPFPDTDNNQEGTSNGSEF). Polar residues predominate over residues 163-174 (TDNNQEGTSNGS). 3 positions are modified to phosphotyrosine: Tyr-183, Tyr-200, and Tyr-217. In terms of domain architecture, DH spans 240 to 437 (KRNRCIRELY…EDVCNYINEE (198 aa)). The region spanning 470 to 598 (RVNLDGEVKM…WMTALLLSKS (129 aa)) is the PH domain. A Phorbol-ester/DAG-type zinc finger spans residues 610 to 664 (NHKVAFHSFRVDVKNPATCDVCDKLMKGLQYQGYKCESCNMSMHKECLGLKKCEA). The region spanning 688 to 750 (HEGDIVVANS…HLDHVSQSRT (63 aa)) is the SH3 1 domain. The interval 778-817 (LPNKLLSDGSSRSLSGPHGSRSSRNSSSSTINGSMDSVPR) is disordered. Low complexity predominate over residues 782-814 (LLSDGSSRSLSGPHGSRSSRNSSSSTINGSMDS). One can recognise an SH2 domain in the interval 831–925 (WYMGEMERAK…ALDTCLKNPY (95 aa)). In terms of domain architecture, SH3 2 spans 926-991 (SQCKVFKAVH…PLSYVKPYDP (66 aa)).

Post-translationally, GEF activity is regulated by phosphorylation on tyrosine residues. As to expression, strong expression in the pharynx, proximal gonad, spermatheca, intestine and rectal epithelia.

In terms of biological role, acts as a guanine nucleotide exchange factor (GEF) for Rho GTPase. Has a critical roles in the generation of rhythmic behaviors: feeding, defecation and ovulation by dynamically regulating the concentration of intracellular calcium. Plays a role in male tail tip morphogenesis. This is Protein vav-1 from Caenorhabditis elegans.